A 348-amino-acid chain; its full sequence is S-adenosyl-L-methionine-dependent methyl transferase PigF (348 aa).

Glu199 lines the S-adenosyl-L-methionine pocket. His247 functions as the Proton acceptor in the catalytic mechanism.

It belongs to the class I-like SAM-binding methyltransferase superfamily. Cation-independent O-methyltransferase family.

Its pathway is antibiotic biosynthesis; prodigiosin biosynthesis. Functionally, involved in the biosynthesis of 4-methoxy-2,2'-bipyrrole-5-carbaldehyde (MBC), one of the terminal products involved in the biosynthesis of the red antibiotic prodigiosin (Pig). Catalyzes the transfer of a methyl group from S-adenosyl-L-methionine (SAM) to the hydroxyl group of 4-hydroxy-2,2'-bipyrrole-5-carbaldehyde (HBC) to yield 4-methoxy-2,2'-bipyrrole-5-carbaldehyde (MBC). The chain is S-adenosyl-L-methionine-dependent methyl transferase PigF from Serratia sp. (strain ATCC 39006) (Prodigiosinella confusarubida).